Consider the following 385-residue polypeptide: Putative UDP-N-acetylglucosamine 2-epimerase (385 aa).

The protein belongs to the UDP-N-acetylglucosamine 2-epimerase family.

It is found in the cytoplasm. It catalyses the reaction UDP-N-acetyl-alpha-D-glucosamine = UDP-N-acetyl-alpha-D-mannosamine. The sequence is that of Putative UDP-N-acetylglucosamine 2-epimerase from Clostridium acetobutylicum (strain ATCC 824 / DSM 792 / JCM 1419 / IAM 19013 / LMG 5710 / NBRC 13948 / NRRL B-527 / VKM B-1787 / 2291 / W).